The sequence spans 264 residues: Shikimate dehydrogenase (NADP(+)) (264 aa).

Residues 14-16 (SLS) and T59 contribute to the shikimate site. K63 functions as the Proton acceptor in the catalytic mechanism. E75 is an NADP(+) binding site. Shikimate-binding residues include N84 and D99. NADP(+)-binding positions include 122 to 126 (GAGGA), 144 to 149 (NRTPSK), and I205. Y207 is a shikimate binding site. G228 contributes to the NADP(+) binding site.

This sequence belongs to the shikimate dehydrogenase family. As to quaternary structure, homodimer.

It carries out the reaction shikimate + NADP(+) = 3-dehydroshikimate + NADPH + H(+). It functions in the pathway metabolic intermediate biosynthesis; chorismate biosynthesis; chorismate from D-erythrose 4-phosphate and phosphoenolpyruvate: step 4/7. Involved in the biosynthesis of the chorismate, which leads to the biosynthesis of aromatic amino acids. Catalyzes the reversible NADPH linked reduction of 3-dehydroshikimate (DHSA) to yield shikimate (SA). The polypeptide is Shikimate dehydrogenase (NADP(+)) (Pyrococcus abyssi (strain GE5 / Orsay)).